A 226-amino-acid polypeptide reads, in one-letter code: 2-C-methyl-D-erythritol 4-phosphate cytidylyltransferase (226 aa).

The protein belongs to the IspD/TarI cytidylyltransferase family. IspD subfamily.

The enzyme catalyses 2-C-methyl-D-erythritol 4-phosphate + CTP + H(+) = 4-CDP-2-C-methyl-D-erythritol + diphosphate. It participates in isoprenoid biosynthesis; isopentenyl diphosphate biosynthesis via DXP pathway; isopentenyl diphosphate from 1-deoxy-D-xylulose 5-phosphate: step 2/6. In terms of biological role, catalyzes the formation of 4-diphosphocytidyl-2-C-methyl-D-erythritol from CTP and 2-C-methyl-D-erythritol 4-phosphate (MEP). The sequence is that of 2-C-methyl-D-erythritol 4-phosphate cytidylyltransferase from Bacillus cereus (strain ATCC 10987 / NRS 248).